A 558-amino-acid chain; its full sequence is MEPADLLPLYLQPEWGEQEPGGATPFVEILEQPKQRGMRFRYKCEGRSAGSIPGEHSTDSARTHPTIRVNHYRGPGRVRVSLVTKDPPHGPHPHELVGRHCQHGYYEAELSPERCVHSFQNLGIQCVKKRELEAAVAERIRTNNNPFNVPMEERGAEYDLSAVRLCFQVWVNGPGGLCPLPPVLSQPIYDNRAPSTAELRILPGDRNSGSCQGGDEIFLLCDKVQKEDIEVRFWAEGWEAKGSFAAADVHRQVAIVFRTPPFRERSLRHPVTVRMELQRPSDRQRSPPLDFRYLPHQGDLQCIEEKRKRTRDTFRAFVQRAPLPGLEPNPEPRPPRRIAVPSRPPPAPQQPPSMVGAPPAPLFPLGVPPASSPTPEPLAEALLQLQFDDGVGGSGPPPSTTTTTTTTQCALGGGIPDPGGSPLDLGALLGDPPFDTIDAAELQRLLGPPETPPGGIGAGGGFGELLSLPTNFGDPPSSTAATFGPSPPMLLSYPEAITRLVQCQTPGGSGGGGPPVGPPQDLGGPLHPPGAPPQPTEDSLPSLGDLDFSAFLSQFPSS.

The region spanning 25 to 311 (PFVEILEQPK…CIEEKRKRTR (287 aa)) is the RHD domain. Serine 281 carries the post-translational modification Phosphoserine; by PKA. Positions 306–309 (KRKR) match the Nuclear localization signal motif. Disordered stretches follow at residues 317-376 (FVQR…PTPE) and 388-544 (DDGV…PSLG). Pro residues-rich tracts occupy residues 342–351 (SRPPPAPQQP) and 358–376 (PPAP…PTPE). The transcriptional activation domain 1 stretch occupies residues 385–444 (LQFDDGVGGSGPPPSTTTTTTTTQCALGGGIPDPGGSPLDLGALLGDPPFDTIDAAELQR). Residues 418 to 433 (PGGSPLDLGALLGDPP) show a composition bias toward low complexity. Residues 454–463 (GGIGAGGGFG) show a composition bias toward gly residues. The interval 524–558 (GPLHPPGAPPQPTEDSLPSLGDLDFSAFLSQFPSS) is transcriptional activation domain 2. Over residues 526–535 (LHPPGAPPQP) the composition is skewed to pro residues. The short motif at 542–558 (SLGDLDFSAFLSQFPSS) is the 9aaTAD element.

As to quaternary structure, component of the NF-kappa-B p65-p50 complex. Component of the NF-kappa-B p65-c-Rel complex. Component of the NF-kappa-B p65-p105 complex. As to expression, spleen; lower level in brain.

The protein localises to the nucleus. The protein resides in the cytoplasm. In terms of biological role, NF-kappa-B is a pleiotropic transcription factor present in almost all cell types and is the endpoint of a series of signal transduction events that are initiated by a vast array of stimuli related to many biological processes such as inflammation, immunity, differentiation, cell growth, tumorigenesis and apoptosis. NF-kappa-B is a homo- or heterodimeric complex formed by the Rel-like domain-containing proteins. The dimers bind at kappa-B sites in the DNA of their target genes and the individual dimers have distinct preferences for different kappa-B sites that they can bind with distinguishable affinity and specificity. Different dimer combinations act as transcriptional activators or repressors, respectively. NF-kappa-B is controlled by various mechanisms of post-translational modification and subcellular compartmentalization as well as by interactions with other cofactors or corepressors. NF-kappa-B complexes are held in the cytoplasm in an inactive state complexed with members of the NF-kappa-B inhibitor (I-kappa-B) family. In a conventional activation pathway, I-kappa-B is phosphorylated by I-kappa-B kinases (IKKs) in response to different activators, subsequently degraded thus liberating the active NF-kappa-B complex which translocates to the nucleus. RELA shows a weak DNA-binding site which could contribute directly to DNA binding in the NF-kappa-B complex. In Gallus gallus (Chicken), this protein is Transcription factor p65 (RELA).